Here is a 227-residue protein sequence, read N- to C-terminus: Phosphatidate cytidylyltransferase (227 aa).

Helical transmembrane passes span 31–51 (FVIA…LVGM), 65–85 (IPYL…LTFL), 93–113 (WLIM…MIGG), 131–151 (WSGL…ASFI), 165–185 (IYLF…DLFI), and 206–226 (GVLD…FISI).

It belongs to the CDS family.

The protein localises to the cell membrane. The enzyme catalyses a 1,2-diacyl-sn-glycero-3-phosphate + CTP + H(+) = a CDP-1,2-diacyl-sn-glycerol + diphosphate. It participates in phospholipid metabolism; CDP-diacylglycerol biosynthesis; CDP-diacylglycerol from sn-glycerol 3-phosphate: step 3/3. The sequence is that of Phosphatidate cytidylyltransferase (cdsA) from Rickettsia felis (strain ATCC VR-1525 / URRWXCal2) (Rickettsia azadi).